The sequence spans 1600 residues: Eukaryotic translation initiation factor 4 gamma 1 (1600 aa).

Positions 1-88 (MNKAPQPTGP…ARPGPAPHVY (88 aa)) are disordered. Pro residues predominate over residues 7–24 (PTGPPPARSPGLPQPAFP). Residue Ser15 is modified to Phosphoserine. Residues 34–48 (STPQATQMNTPSQPR) show a composition bias toward polar residues. Positions 60–79 (PSRAQPPSSAASRVQSAAPA) are enriched in low complexity. 2 positions are modified to omega-N-methylarginine: Arg80 and Arg117. Disordered stretches follow at residues 173–230 (NQPP…NGES), 243–326 (SQGA…LSPE), 366–501 (ETHE…QLSQ), 507–526 (AATQ…KELN), and 541–606 (VDPA…DQWK). A PABPC1-binding region spans residues 179-207 (APKRERKTIRIRDPNQGGKDITEEIMSGA). A compositionally biased stretch (polar residues) spans 208 to 220 (RTASTPTPPQTGG). The residue at position 214 (Thr214) is a Phosphothreonine. Ser230 carries the post-translational modification Phosphoserine. Over residues 269 to 280 (SPSPTPSPPPIL) the composition is skewed to pro residues. Ser324 bears the Phosphoserine mark. Residues 438–449 (KVSSAALASILS) show a composition bias toward low complexity. Positions 463–479 (QEEEMEEDDDDEEGGEA) are enriched in acidic residues. Positions 551–562 (QPPTGSNPSPES) are enriched in polar residues. 2 stretches are compositionally biased toward basic and acidic residues: residues 578 to 587 (WDSKEDKIHN) and 596 to 606 (QKYEYKSDQWK). Residue Lys606 is modified to N6-acetyllysine. The interval 611-622 (EEKKRYDREFLL) is EIF4E-binding. A Phosphothreonine modification is found at Thr651. Disordered stretches follow at residues 667–719 (GPDF…TRKI) and 734–760 (AEKA…DGSK). The eIF3/EIF4A-binding stretch occupies residues 686–1089 (GPPRGGPGGE…GSIDSNNQLF (404 aa)). Omega-N-methylarginine occurs at positions 689 and 698. A compositionally biased stretch (low complexity) spans 697-707 (PRGPAGLGPRR). Positions 745–760 (TAADKDRGEEDADGSK) are enriched in basic and acidic residues. The 229-residue stretch at 765-993 (FRRVRSILNK…QDVLDLRQSN (229 aa)) folds into the MIF4G domain. 2 disordered regions span residues 1029–1117 (AKGS…SEAT) and 1129–1238 (QQTL…AALS). The residue at position 1032 (Ser1032) is a Phosphoserine. An omega-N-methylarginine mark is found at Arg1036 and Arg1046. Phosphoserine is present on residues Ser1081 and Ser1096. Lys1099 carries the N6-acetyllysine modification. A phosphoserine mark is found at Ser1147 and Ser1149. Residues 1148–1180 (LSRERGEKAGDRGDRLERSERGGDRGDRLDRAR) show a composition bias toward basic and acidic residues. At Ser1187 the chain carries Phosphoserine; by PKC/PRKCA. Residues 1188-1225 (FSKEVEERSRERPSQPEGLRKAASLTEDRGRDPVKREA) are compositionally biased toward basic and acidic residues. Phosphoserine occurs at positions 1189, 1196, and 1211. Thr1213 is modified (phosphothreonine). Phosphoserine occurs at positions 1231 and 1238. In terms of domain architecture, MI spans 1241–1363 (EVEKKSKAII…PMGELFREIT (123 aa)). The W2 domain occupies 1429 to 1599 (ESEAPGQRTL…REAEDEESDH (171 aa)). Residues 1450–1600 (LLKDGGSNQR…EAEDEESDHN (151 aa)) form an EIF4A-binding region. Residues 1585 to 1600 (FFNWLREAEDEESDHN) form a necessary but not sufficient for MKNK1-binding region. Ser1597 is modified (phosphoserine).

It belongs to the eukaryotic initiation factor 4G family. EIF4F is a multi-subunit complex, the composition of which varies with external and internal environmental conditions. It is composed of at least EIF4A, EIF4E (cap-binding) and EIF4G1/EIF4G3. Interacts with eIF3 complex, mutually exclusive with EIF4A1 or EIF4A2, EIF4E and through its N-terminus with PABPC1. Interacts with EIF4E or with EIF1 (mutually exclusive) through a common binding site. Interacts through its C-terminus with the serine/threonine kinases MKNK1, and with MKNK2. Appears to act as a scaffold protein, holding these enzymes in place to phosphorylate EIF4E. Non-phosphorylated EIF4EBP1 competes with EIF4G1/EIF4G3 to interact with EIF4E; insulin stimulated MAP-kinase (MAPK1 and MAPK3) phosphorylation of EIF4EBP1 causes dissociation of the complex allowing EIF4G1/EIF4G3 to bind and consequent initiation of translation. EIF4G1/EIF4G3 interacts with PABPC1 to bring about circularization of the mRNA. Interacts with EIF4E3. Interacts with CIRBP and MIF4GD. Interacts with RBM4. Interacts with HNRNPD/AUF1; the interaction requires RNA. Interacts with DDX3X; the interaction requires RNA. Interacts with DAZAP2. In terms of assembly, (Microbial infection) Interacts with murine norovirus viral genome-linked protein (via C-terminus); this interaction plays a role in translation of viral proteins. Phosphorylated at multiple sites in vivo. Phosphorylation at Ser-1187 by PRKCA induces binding to MKNK1.

Its subcellular location is the cytoplasm. It localises to the nucleus. The protein resides in the stress granule. In terms of biological role, component of the protein complex eIF4F, which is involved in the recognition of the mRNA cap, ATP-dependent unwinding of 5'-terminal secondary structure and recruitment of mRNA to the ribosome. Exists in two complexes, either with EIF1 or with EIF4E (mutually exclusive). Together with EIF1, is required for leaky scanning, in particular for avoiding cap-proximal start codon. Together with EIF4E, antagonizes the scanning promoted by EIF1-EIF4G1 and locates the start codon (through a TISU element) without scanning. As a member of the eIF4F complex, required for endoplasmic reticulum stress-induced ATF4 mRNA translation. The sequence is that of Eukaryotic translation initiation factor 4 gamma 1 (Eif4g1) from Mus musculus (Mouse).